The chain runs to 359 residues: Putative transposase y4uE (359 aa).

Disordered stretches follow at residues 1–31 (MGDG…APGG) and 318–359 (HYAH…EEAA).

This sequence belongs to the transposase 9 family.

The protein is Putative transposase y4uE of Sinorhizobium fredii (strain NBRC 101917 / NGR234).